The primary structure comprises 465 residues: Kinesin-like protein KIN-1 (465 aa).

The Kinesin motor domain maps to Asn3–Ile334. Gly87–Thr94 serves as a coordination point for ATP. The interval Pro338 to Asp358 is disordered. A compositionally biased stretch (basic and acidic residues) spans Ser341–Asp358. Residues Val402 to Glu444 adopt a coiled-coil conformation.

It belongs to the TRAFAC class myosin-kinesin ATPase superfamily. Kinesin family. KIN-1 subfamily. Homodimer. Interacts with WIP1 and WIP2. Specifically expressed in ovules and anthers.

In terms of biological role, kinesin-like motor protein that promotes synapsis and is required for proper crossover distribution in meiosis. Plays a role in the nuclear division cycles during megagametogenesis. The polypeptide is Kinesin-like protein KIN-1 (Arabidopsis thaliana (Mouse-ear cress)).